The sequence spans 142 residues: Hemoglobin subunit alpha (142 aa).

In terms of domain architecture, Globin spans 2–142 (VLSPADKTNV…VSTVLTSKYR (141 aa)). Ser4 carries the phosphoserine modification. Lys8 is modified (N6-succinyllysine). Position 9 is a phosphothreonine (Thr9). Lys12 carries the post-translational modification N6-succinyllysine. Lys17 bears the N6-acetyllysine; alternate mark. Residue Lys17 is modified to N6-succinyllysine; alternate. Position 25 is a phosphotyrosine (Tyr25). Residue Ser36 is modified to Phosphoserine. N6-succinyllysine is present on Lys41. The residue at position 50 (Ser50) is a Phosphoserine. His59 is an O2 binding site. His88 is a binding site for heme b. The residue at position 103 (Ser103) is a Phosphoserine. The residue at position 109 (Thr109) is a Phosphothreonine. Ser125 carries the phosphoserine modification. Phosphothreonine occurs at positions 135 and 138. Phosphoserine is present on Ser139.

The protein belongs to the globin family. Heterotetramer of two alpha chains and two beta chains. As to expression, red blood cells.

Involved in oxygen transport from the lung to the various peripheral tissues. Its function is as follows. Hemopressin acts as an antagonist peptide of the cannabinoid receptor CNR1. Hemopressin-binding efficiently blocks cannabinoid receptor CNR1 and subsequent signaling. The chain is Hemoglobin subunit alpha (HBA) from Ailuropoda melanoleuca (Giant panda).